Consider the following 292-residue polypeptide: MIAGSMVALVTPMDAQGGLDWEALSKLVDFHLQEGTNAIVAVGTTGESATLDVGEHIEVIKRVVDQVAGRIPVIAGTGGNSTRESVELTRAAKEVGADACLLVTPYYNKPTQEGLYLHFRHIAEAVAIPQILYNVPGRTVCDMLPETVERLSKIDNIIGIKEATGDLQRAQEVLDRVSKDFLVYSGDDATAVELMLLGGKGNISVTANVAPRAMSDLCAAAMRGEAAIARAINDRLMPLHKALFLESNPIPVKWALHEMGLMGDGIRLPLTWLSPRCHEPLRQAMRQCGVLA.

Residue Thr45 participates in pyruvate binding. Tyr133 acts as the Proton donor/acceptor in catalysis. The active-site Schiff-base intermediate with substrate is the Lys161. Ile203 serves as a coordination point for pyruvate.

The protein belongs to the DapA family. As to quaternary structure, homodimer.

It is found in the cytoplasm. It carries out the reaction L-aspartate 4-semialdehyde + pyruvate = (2S,4S)-4-hydroxy-2,3,4,5-tetrahydrodipicolinate + H2O + H(+). The protein operates within amino-acid biosynthesis; L-lysine biosynthesis via DAP pathway; (S)-tetrahydrodipicolinate from L-aspartate: step 3/4. Functionally, catalyzes the condensation of (S)-aspartate-beta-semialdehyde [(S)-ASA] and pyruvate to 4-hydroxy-tetrahydrodipicolinate (HTPA). The polypeptide is 4-hydroxy-tetrahydrodipicolinate synthase (Ectopseudomonas mendocina (strain ymp) (Pseudomonas mendocina)).